We begin with the raw amino-acid sequence, 205 residues long: Transcription antitermination protein NusB (205 aa).

Belongs to the NusB family.

In terms of biological role, involved in transcription antitermination. Required for transcription of ribosomal RNA (rRNA) genes. Binds specifically to the boxA antiterminator sequence of the ribosomal RNA (rrn) operons. The protein is Transcription antitermination protein NusB of Acaryochloris marina (strain MBIC 11017).